Reading from the N-terminus, the 431-residue chain is Adenylosuccinate synthetase (431 aa).

GTP contacts are provided by residues Gly-12–Lys-18 and Gly-40–Thr-42. The active-site Proton acceptor is Asp-13. Asp-13 and Gly-40 together coordinate Mg(2+). IMP contacts are provided by residues Asp-13–Lys-16, Asn-38–His-41, Thr-130, Arg-144, Gln-225, Thr-240, and Arg-304. His-41 functions as the Proton donor in the catalytic mechanism. Ala-300 to Arg-306 serves as a coordination point for substrate. Residues Arg-306, Lys-332–Asp-334, and Ser-414–Gly-416 contribute to the GTP site.

Belongs to the adenylosuccinate synthetase family. In terms of assembly, homodimer. Mg(2+) is required as a cofactor.

It is found in the cytoplasm. The catalysed reaction is IMP + L-aspartate + GTP = N(6)-(1,2-dicarboxyethyl)-AMP + GDP + phosphate + 2 H(+). It participates in purine metabolism; AMP biosynthesis via de novo pathway; AMP from IMP: step 1/2. Plays an important role in the de novo pathway of purine nucleotide biosynthesis. Catalyzes the first committed step in the biosynthesis of AMP from IMP. The sequence is that of Adenylosuccinate synthetase from Anaeromyxobacter sp. (strain Fw109-5).